The following is a 202-amino-acid chain: uncharacterized protein (202 aa).

This is an uncharacterized protein from Dictyostelium discoideum (Social amoeba).